Reading from the N-terminus, the 1406-residue chain is DNA-directed RNA polymerase subunit beta' (1406 aa).

Zn(2+)-binding residues include Cys-72, Cys-74, Cys-87, and Cys-90. Mg(2+) is bound by residues Asp-462, Asp-464, and Asp-466. Zn(2+) contacts are provided by Cys-816, Cys-891, Cys-898, and Cys-901.

The protein belongs to the RNA polymerase beta' chain family. As to quaternary structure, the RNAP catalytic core consists of 2 alpha, 1 beta, 1 beta' and 1 omega subunit. When a sigma factor is associated with the core the holoenzyme is formed, which can initiate transcription. The cofactor is Mg(2+). Zn(2+) serves as cofactor.

It catalyses the reaction RNA(n) + a ribonucleoside 5'-triphosphate = RNA(n+1) + diphosphate. Its function is as follows. DNA-dependent RNA polymerase catalyzes the transcription of DNA into RNA using the four ribonucleoside triphosphates as substrates. The sequence is that of DNA-directed RNA polymerase subunit beta' from Psychrobacter arcticus (strain DSM 17307 / VKM B-2377 / 273-4).